The sequence spans 499 residues: MELMKQLEVWFLVGSQHLYGAATLKQVADHAHTITSQLNERAGLPVKIVLKPTGTTLDEISAIARDANHDQRCIGLMVWMHTFSPAKMWIPALSQLQKPLLQFHTQFNRDLPWSEIDMDFMNLNQTAHGGREFGFMGARLRLPRTVVVGHWQDEEAHRKLGNWMRVAAAIHDSRHLKIARFGDNMRNVAVTEGDKIEAQIQFGYQVNYHPVGDLVKVIDAVPASDIEALLAEYEESYTLTEAVQAGGVLRASLYEAARQELGMKKFLTDGGFGAFTTTFEDLHGLHQLPGLACQRLMQQGFGFGAEGDWKTAALLRTLKVMGTGLAGGTSFMEDYTYHLEAGNNLVLGAHMLEVCPSIAADKPVLDAQHLGIGKKADPARLLFAAPAGKAVNASLIDLGNRFRLVVNQLEVVDLPEAMPKLPVASALWQPMPDLQTSAEAWILAGAAHHSVFTQSVDIEQLRTFADLMGIEFVVIDKHTRIPELKQTLQWNEVYYKLCH.

E306, E333, H350, and H449 together coordinate Mn(2+).

The protein belongs to the arabinose isomerase family. Requires Mn(2+) as cofactor.

The enzyme catalyses beta-L-arabinopyranose = L-ribulose. It functions in the pathway carbohydrate degradation; L-arabinose degradation via L-ribulose; D-xylulose 5-phosphate from L-arabinose (bacterial route): step 1/3. Catalyzes the conversion of L-arabinose to L-ribulose. This chain is L-arabinose isomerase, found in Aeromonas hydrophila subsp. hydrophila (strain ATCC 7966 / DSM 30187 / BCRC 13018 / CCUG 14551 / JCM 1027 / KCTC 2358 / NCIMB 9240 / NCTC 8049).